The chain runs to 480 residues: 11S globulin subunit beta (480 aa).

The first 21 residues, 1 to 21 (MARSSLFTFLCLAVFINGCLS), serve as a signal peptide directing secretion. Gln-22 carries the post-translational modification Pyrrolidone carboxylic acid. Cystine bridges form between Cys-48-Cys-81 and Cys-124-Cys-303. Cupin type-1 domains lie at 51-251 (ENLR…GLVR) and 309-458 (QNIG…EEAQ). Mg(2+) contacts are provided by Lys-408 and Arg-468.

This sequence belongs to the 11S seed storage protein (globulins) family. In terms of assembly, hexamer; each subunit is composed of an acidic and a basic chain derived from a single precursor and linked by a disulfide bond.

Its function is as follows. This is a seed storage protein. This chain is 11S globulin subunit beta, found in Cucurbita maxima (Pumpkin).